The following is a 436-amino-acid chain: Xylose isomerase (436 aa).

Catalysis depends on residues His100 and Asp103. Mg(2+) contacts are provided by Glu231, Glu267, His270, Asp295, Asp306, Asp308, and Asp338.

This sequence belongs to the xylose isomerase family. In terms of assembly, homotetramer. The cofactor is Mg(2+).

It is found in the cytoplasm. It carries out the reaction alpha-D-xylose = alpha-D-xylulofuranose. This Agrobacterium fabrum (strain C58 / ATCC 33970) (Agrobacterium tumefaciens (strain C58)) protein is Xylose isomerase.